Consider the following 156-residue polypeptide: Ribosome maturation factor RimP (156 aa).

Belongs to the RimP family.

The protein localises to the cytoplasm. Required for maturation of 30S ribosomal subunits. This chain is Ribosome maturation factor RimP, found in Oceanobacillus iheyensis (strain DSM 14371 / CIP 107618 / JCM 11309 / KCTC 3954 / HTE831).